Reading from the N-terminus, the 192-residue chain is 7-methyl-GTP pyrophosphatase (192 aa).

The Proton acceptor role is filled by Asp69.

The protein belongs to the Maf family. YceF subfamily. A divalent metal cation serves as cofactor.

It is found in the cytoplasm. The catalysed reaction is N(7)-methyl-GTP + H2O = N(7)-methyl-GMP + diphosphate + H(+). Its function is as follows. Nucleoside triphosphate pyrophosphatase that hydrolyzes 7-methyl-GTP (m(7)GTP). May have a dual role in cell division arrest and in preventing the incorporation of modified nucleotides into cellular nucleic acids. The sequence is that of 7-methyl-GTP pyrophosphatase (maf-2) from Pseudomonas putida (strain ATCC 47054 / DSM 6125 / CFBP 8728 / NCIMB 11950 / KT2440).